Reading from the N-terminus, the 430-residue chain is Adenylosuccinate synthetase (430 aa).

GTP-binding positions include 12–18 (GDEGKGK) and 40–42 (GHT). Asp13 functions as the Proton acceptor in the catalytic mechanism. The Mg(2+) site is built by Asp13 and Gly40. Residues 13–16 (DEGK), 38–41 (NAGH), Thr130, Arg144, Gln225, Thr240, and Arg304 each bind IMP. His41 serves as the catalytic Proton donor. Substrate is bound at residue 300–306 (STTGRPR). GTP-binding positions include Arg306, 332-334 (KLD), and 414-416 (SVG).

The protein belongs to the adenylosuccinate synthetase family. Homodimer. Requires Mg(2+) as cofactor.

The protein localises to the cytoplasm. The enzyme catalyses IMP + L-aspartate + GTP = N(6)-(1,2-dicarboxyethyl)-AMP + GDP + phosphate + 2 H(+). Its pathway is purine metabolism; AMP biosynthesis via de novo pathway; AMP from IMP: step 1/2. Plays an important role in the de novo pathway of purine nucleotide biosynthesis. Catalyzes the first committed step in the biosynthesis of AMP from IMP. This Pelobacter propionicus (strain DSM 2379 / NBRC 103807 / OttBd1) protein is Adenylosuccinate synthetase.